The following is a 474-amino-acid chain: 6-phospho-beta-glucosidase AscB (474 aa).

The active-site Proton donor is glutamate 180. Glutamate 372 (nucleophile) is an active-site residue.

It belongs to the glycosyl hydrolase 1 family.

The catalysed reaction is 6-phospho-beta-D-glucosyl-(1-&gt;4)-D-glucose + H2O = D-glucose 6-phosphate + D-glucose. Can hydrolyze salicin, cellobiose, and probably arbutin. This Escherichia coli (strain K12) protein is 6-phospho-beta-glucosidase AscB (ascB).